The chain runs to 763 residues: Glycerophosphodiester phosphodiesterase GDPDL1 (763 aa).

The N-terminal stretch at 1–35 (MNSRPSNPTKLVIRSSTLLFCGVVLIHLFAAQIDA) is a signal peptide. Over 36 to 744 (QRSTSRWQTL…STIAQAPSGQ (709 aa)) the chain is Extracellular. The region spanning 50 to 350 (PLVIARGGFS…DFPITASAAV (301 aa)) is the GP-PDE 1 domain. 10 N-linked (GlcNAc...) asparagine glycosylation sites follow: Asn-105, Asn-192, Asn-248, Asn-257, Asn-315, Asn-359, Asn-430, Asn-534, Asn-547, and Asn-654. The region spanning 366–668 (FLVISKDGAS…EFPFTAARYK (303 aa)) is the GP-PDE 2 domain. Residues 745-762 (TRLKLSLLLSVFFLSLLL) form a helical membrane-spanning segment. Leu-763 is a topological domain (cytoplasmic).

It belongs to the glycerophosphoryl diester phosphodiesterase family. It depends on Ca(2+) as a cofactor. Expressed in rosette and cauline leaves, stems, flowers and siliques.

The protein localises to the cell membrane. It carries out the reaction a sn-glycero-3-phosphodiester + H2O = an alcohol + sn-glycerol 3-phosphate + H(+). Its function is as follows. Hydrolyzes glycerolphosphoglycerol, glycerophosphocholine and glycerophosphoethanolamine in vitro. This is Glycerophosphodiester phosphodiesterase GDPDL1 from Arabidopsis thaliana (Mouse-ear cress).